The sequence spans 320 residues: Tryptophan--tRNA ligase (320 aa).

Residues 8 to 10 (QPT) and 16 to 17 (GN) each bind ATP. The 'HIGH' region signature appears at 9–17 (PTGRPHWGN). An L-tryptophan-binding site is contributed by Asp-131. Residues 143-145 (GVD), Val-182, and 189-193 (KMSKS) contribute to the ATP site. The 'KMSKS' region motif lies at 189-193 (KMSKS).

Belongs to the class-I aminoacyl-tRNA synthetase family. In terms of assembly, homodimer.

The protein resides in the cytoplasm. It carries out the reaction tRNA(Trp) + L-tryptophan + ATP = L-tryptophyl-tRNA(Trp) + AMP + diphosphate + H(+). In terms of biological role, catalyzes the attachment of tryptophan to tRNA(Trp). The protein is Tryptophan--tRNA ligase of Rhodopirellula baltica (strain DSM 10527 / NCIMB 13988 / SH1).